Here is a 3748-residue protein sequence, read N- to C-terminus: Intermembrane lipid transfer protein VPS13C (3748 aa).

Residues 3 to 115 (LESVVADLLN…SLQDIKQKEL (113 aa)) enclose the Chorein N-terminal domain. Ser132 carries the phosphoserine modification. Thr613 carries the phosphothreonine modification. Residue Ser618 is modified to Phosphoserine. Residue Thr623 is modified to Phosphothreonine. Ser736, Ser841, Ser871, and Ser873 each carry phosphoserine. The FFAT motif lies at 876-882 (EFFDAED). Thr1968 carries the post-translational modification Phosphothreonine. Residues Ser1974 and Ser2442 each carry the phosphoserine modification. Positions 2410–3304 (DYSLKDRAPF…IQQDIDALNT (895 aa)) are required for late endosome/lysosome localization. The region spanning 2760–3012 (ELSVFSPYWL…LFAWADPTGI (253 aa)) is the SHR-BD domain. Positions 3305 to 3748 (ELMESSMTDM…VKLLRPQGPS (444 aa)) are required for lipid droplet localization. Residues Arg3514 and Arg3521 each carry the omega-N-methylarginine modification. Position 3533 is an N6-acetyllysine (Lys3533).

Belongs to the VPS13 family.

It is found in the mitochondrion outer membrane. Its subcellular location is the lipid droplet. It localises to the endoplasmic reticulum membrane. The protein localises to the lysosome membrane. The protein resides in the late endosome membrane. Its function is as follows. Mediates the transfer of lipids between membranes at organelle contact sites. Necessary for proper mitochondrial function and maintenance of mitochondrial transmembrane potential. Involved in the regulation of PINK1/PRKN-mediated mitophagy in response to mitochondrial depolarization. The polypeptide is Intermembrane lipid transfer protein VPS13C (Mus musculus (Mouse)).